Here is a 1052-residue protein sequence, read N- to C-terminus: MAAAYLDPNLNHTPSSSTKTHLGTGMERSPGAMERVLKVFHYFESSSEPTTWASIIRHGDATDVRGIIQKIVDSHKVKHVACYGFRLSHLRSEEVHWLHVDMGVSSVREKYELAHPPEEWKYELRIRYLPKGFLNQFTEDKPTLNFFYQQVKSDYMQEIADQVDQEIALKLGCLEIRRSYWEMRGNALEKKSNYEVLEKDVGLKRFFPKSLLDSVKAKTLRKLIQQTFRQFANLNREESILKFFEILSPVYRFDKECFKCALGSSWIISVELAIGPEEGISYLTDKGCNPTHLADFNQVQTIQYSNSEDKDRKGMLQLKIAGAPEPLTVTAPSLTIAENMADLIDGYCRLVNGATQSFIIRPQKEGERALPSIPKLANSEKQGMRTHAVSVSETDDYAEIIDEEDTYTMPSTRDYEIQRERIELGRCIGEGQFGDVHQGVYLSPENPALAVAIKTCKNCTSDSVREKFLQEALTMRQFDHPHIVKLIGVITENPVWIIMELCTLGELRSFLQVRKYSLDLASLILYAYQLSTALAYLESKRFVHRDIAARNVLVSSNDCVKLGDFGLSRYMEDSTYYKASKGKLPIKWMAPESINFRRFTSASDVWMFGVCMWEILMHGVKPFQGVKNNDVIGRIENGERLPMPPNCPPTLYSLMTKCWAYDPSRRPRFTELKAQLSTILEEEKVQQEERMRMESRRQATVSWDSGGSDEAPPKPSRPGYPSPRSSEGFYPSPQHMVQTNHYQVSGYPGSHGIPAMAGSIYQGQASLLDQTELWNHRPQEMSMWQPSVEDSAALDLRGMGQVLPPHLMEERLIRQQQEMEEDQRWLEKEERFLKPDVRLSRGSIDREDGSFQGPTGNQHIYQPVGKPDPAAPPKKPPRPGAPGHLSNLSSISSPADSYNEGVKLQPQEISPPPTANLDRSNDKVYENVTGLVKAVIEMSSKIQPAPPEEYVPMVKEVGLALRTLLATVDETIPALPASTHREIEMAQKLLNSDLGELISKMKLAQQYVMTSLQQEYKKQMLTAAHALAVDAKNLLDVIDQARLKMLGQTRPH.

Residues 1–27 form a disordered region; the sequence is MAAAYLDPNLNHTPSSSTKTHLGTGME. Ala2 carries the N-acetylalanine modification. A Phosphotyrosine modification is found at Tyr5. Polar residues predominate over residues 10–21; the sequence is LNHTPSSSTKTH. Thr13 is subject to Phosphothreonine. A phosphoserine mark is found at Ser29 and Ser54. The FERM domain occupies 35–355; the sequence is RVLKVFHYFE…GYCRLVNGAT (321 aa). Lys152 is covalently cross-linked (Glycyl lysine isopeptide (Lys-Gly) (interchain with G-Cter in SUMO)). Residues Tyr397 and Tyr407 each carry the phosphotyrosine modification. Tyr397 is subject to Phosphotyrosine; by autocatalysis. ATP-binding positions include 428–434, Lys454, and 500–502; these read IGEGQFG and ELC. Positions 431–680 constitute a Protein kinase domain; that stretch reads GQFGDVHQGV…ELKAQLSTIL (250 aa). Asp546 (proton acceptor) is an active-site residue. At Tyr570 the chain carries Phosphotyrosine. Phosphotyrosine; by RET and SRC is present on residues Tyr576 and Tyr577. At Ser580 the chain carries Phosphoserine. The segment covering 685–697 has biased composition (basic and acidic residues); it reads VQQEERMRMESRR. Disordered regions lie at residues 685–734 and 837–921; these read VQQE…PSPQ and VRLS…DRSN. Residues 707 to 1052 are interaction with TGFB1I1; it reads GSDEAPPKPS…LKMLGQTRPH (346 aa). The residue at position 722 (Ser722) is a Phosphoserine. Position 732 is a phosphoserine; by CDK5 (Ser732). Positions 837–849 are enriched in basic and acidic residues; sequence VRLSRGSIDREDG. Residue Ser843 is modified to Phosphoserine. At Tyr861 the chain carries Phosphotyrosine. A compositionally biased stretch (pro residues) spans 869 to 880; the sequence is PAAPPKKPPRPG. Residues 886-896 are compositionally biased toward polar residues; it reads SNLSSISSPAD. Ser910 carries the phosphoserine modification. The interval 912–1052 is interaction with ARHGEF28; it reads PPTANLDRSN…LKMLGQTRPH (141 aa). Thr914 is subject to Phosphothreonine. Position 925 is a phosphotyrosine; by SRC (Tyr925).

Belongs to the protein kinase superfamily. Tyr protein kinase family. FAK subfamily. Interacts with GIT1. Component of a complex that contains at least FER, CTTN and PTK2/FAK1. Interacts with BMX. Interacts with STEAP4. Interacts with ZFYVE21. Interacts with ESR1. Interacts with FGR, FLT4 and RET. Interacts with EPHA2 in resting cells; activation of EPHA2 recruits PTPN11, leading to dephosphorylation of PTK2/FAK1 and dissociation of the complex. Interacts with EPHA1 (kinase activity-dependent). Interacts with MISP. Interacts with PIAS1. Interacts with ARHGAP26 and SHC1. Interacts with RB1CC1; this inhibits PTK2/FAK1 activity and activation of downstream signaling pathways. Interacts with P53/TP53. Interacts with STAT1. Interacts with WASL. Interacts with ARHGEF7. Interacts with DCC. Interacts (via first Pro-rich region) with CAS family members (via SH3 domain), including BCAR1, BCAR3 and CASS4. Interacts with NEDD9 (via C-terminus). Interacts with SORBS1. Interacts with ARHGEF28. Interacts with SHB. Part of a complex composed of THSD1, PTK2/FAK1, TLN1 and VCL. Interacts with PXN and TLN1. Interacts with TGFB1I1. Interacts with PIK3R1 or PIK3R2. Interacts with SRC, GRB2 and GRB7. Interacts with LPXN (via LD motif 3). Interacts with CD36. Interacts with EMP2; regulates PTK2 activation and localization. Interacts with DSCAM. Interacts with AMBRA1. Interacts (when tyrosine-phosphorylated) with tensin TNS1; the interaction is increased by phosphorylation of TNS1. In terms of processing, phosphorylated on tyrosine residues upon activation, e.g. upon integrin signaling. Tyr-397 is the major autophosphorylation site, but other kinases can also phosphorylate this residue. Phosphorylation at Tyr-397 promotes interaction with SRC and SRC family members, leading to phosphorylation at Tyr-576, Tyr-577 and at additional tyrosine residues. FGR promotes phosphorylation at Tyr-397 and Tyr-576. FER promotes phosphorylation at Tyr-577, Tyr-861 and Tyr-925, even when cells are not adherent. Tyr-397, Tyr-576 and Ser-722 are phosphorylated only when cells are adherent. Phosphorylation at Tyr-397 is important for interaction with BMX, PIK3R1 and SHC1. Phosphorylation at Tyr-925 is important for interaction with GRB2. Dephosphorylated by PTPN11; PTPN11 is recruited to PTK2 via EPHA2 (tyrosine phosphorylated). Microtubule-induced dephosphorylation at Tyr-397 is crucial for the induction of focal adhesion disassembly; this dephosphorylation could be catalyzed by PTPN11 and regulated by ZFYVE21. Phosphorylation on tyrosine residues is enhanced by NTN1. Post-translationally, sumoylated; this enhances autophosphorylation.

Its subcellular location is the cell junction. The protein resides in the focal adhesion. It is found in the cell membrane. The protein localises to the cytoplasm. It localises to the perinuclear region. Its subcellular location is the cell cortex. The protein resides in the cytoskeleton. It is found in the microtubule organizing center. The protein localises to the centrosome. It localises to the nucleus. Its subcellular location is the cilium basal body. The enzyme catalyses L-tyrosyl-[protein] + ATP = O-phospho-L-tyrosyl-[protein] + ADP + H(+). Its activity is regulated as follows. Subject to autoinhibition, mediated by interactions between the FERM domain and the kinase domain. Activated by autophosphorylation at Tyr-397. This promotes interaction with SRC and phosphorylation at Tyr-576 and Tyr-577 in the kinase activation loop by SRC. Phosphorylation at Tyr-397, Tyr-576 and Tyr-577 is required for maximal kinase activity. In terms of biological role, non-receptor protein-tyrosine kinase that plays an essential role in regulating cell migration, adhesion, spreading, reorganization of the actin cytoskeleton, formation and disassembly of focal adhesions and cell protrusions, cell cycle progression, cell proliferation and apoptosis. Required for early embryonic development and placenta development. Required for embryonic angiogenesis, normal cardiomyocyte migration and proliferation, and normal heart development. Regulates axon growth and neuronal cell migration, axon branching and synapse formation; required for normal development of the nervous system. Plays a role in osteogenesis and differentiation of osteoblasts. Functions in integrin signal transduction, but also in signaling downstream of numerous growth factor receptors, G-protein coupled receptors (GPCR), EPHA2, netrin receptors and LDL receptors. Forms multisubunit signaling complexes with SRC and SRC family members upon activation; this leads to the phosphorylation of additional tyrosine residues, creating binding sites for scaffold proteins, effectors and substrates. Regulates numerous signaling pathways. Promotes activation of phosphatidylinositol 3-kinase and the AKT1 signaling cascade. Promotes activation of MAPK1/ERK2, MAPK3/ERK1 and the MAP kinase signaling cascade. Promotes localized and transient activation of guanine nucleotide exchange factors (GEFs) and GTPase-activating proteins (GAPs), and thereby modulates the activity of Rho family GTPases. Signaling via CAS family members mediates activation of RAC1. Phosphorylates NEDD9 following integrin stimulation. Recruits the ubiquitin ligase MDM2 to P53/TP53 in the nucleus, and thereby regulates P53/TP53 activity, P53/TP53 ubiquitination and proteasomal degradation. Phosphorylates SRC; this increases SRC kinase activity. Phosphorylates ACTN1, ARHGEF7, GRB7, RET and WASL. Promotes phosphorylation of PXN and STAT1; most likely PXN and STAT1 are phosphorylated by a SRC family kinase that is recruited to autophosphorylated PTK2/FAK1, rather than by PTK2/FAK1 itself. Promotes phosphorylation of BCAR1; GIT2 and SHC1; this requires both SRC and PTK2/FAK1. Promotes phosphorylation of BMX and PIK3R1. Does not contain a kinase domain and inhibits PTK2/FAK1 phosphorylation and signaling. Its enhanced expression can attenuate the nuclear accumulation of LPXN and limit its ability to enhance serum response factor (SRF)-dependent gene transcription. The chain is Focal adhesion kinase 1 from Mus musculus (Mouse).